A 941-amino-acid chain; its full sequence is Protocadherin alpha-12 (941 aa).

The first 29 residues, 1–29 (MVIIGPRGPGSQRLLLSLLLLAAWEVGSG), serve as a signal peptide directing secretion. Cadherin domains follow at residues 30–133 (QLHY…PPVF), 134–242 (RERE…GPAF), 243–350 (DKPS…VPEV), 351–455 (MVTS…APAF), 456–565 (AQPE…APAL), and 581–678 (VPRS…APKT). Over 30–697 (QLHYSVYEEA…DPEAALVDIN (668 aa)) the chain is Extracellular. Residues N257 and N265 are each glycosylated (N-linked (GlcNAc...) asparagine). The N-linked (GlcNAc...) asparagine glycan is linked to N548. Residues 698–718 (VYLIIAICAVSSLLVLTLLLY) form a helical membrane-spanning segment. Residues 719 to 941 (TALRCSAPPT…GNSTTDNSDQ (223 aa)) are Cytoplasmic-facing. PXXP repeat units follow at residues 734–737 (PGKP), 790–793 (PRQP), 823–826 (PGGP), 863–866 (GPGN), and 882–885 (PGSP). The tract at residues 734–885 (PGKPTLVCSS…PDKFIIPGSP (152 aa)) is 5 X 4 AA repeats of P-X-X-P. Residues 818 to 941 (ILRAGPGGPD…GNSTTDNSDQ (124 aa)) are disordered. Residues 900-914 (DKSDFITFGKKEETK) show a composition bias toward basic and acidic residues.

Its subcellular location is the cell membrane. Its function is as follows. Potential calcium-dependent cell-adhesion protein. May be involved in the establishment and maintenance of specific neuronal connections in the brain. The chain is Protocadherin alpha-12 (PCDHA12) from Homo sapiens (Human).